We begin with the raw amino-acid sequence, 705 residues long: Methionine--tRNA ligase (705 aa).

The 'HIGH' region motif lies at 17 to 27 (PYANGPVHLGH). Zn(2+) contacts are provided by Cys-149, Cys-152, Cys-162, and Cys-165. A 'KMSKS' region motif is present at residues 347-351 (KFSKS). Residue Lys-350 coordinates ATP. The 102-residue stretch at 604 to 705 (EFQKVDLRVA…GEGINGQSVQ (102 aa)) folds into the tRNA-binding domain.

Belongs to the class-I aminoacyl-tRNA synthetase family. MetG type 1 subfamily. As to quaternary structure, homodimer. Zn(2+) serves as cofactor.

It localises to the cytoplasm. It catalyses the reaction tRNA(Met) + L-methionine + ATP = L-methionyl-tRNA(Met) + AMP + diphosphate. Functionally, is required not only for elongation of protein synthesis but also for the initiation of all mRNA translation through initiator tRNA(fMet) aminoacylation. The chain is Methionine--tRNA ligase from Chlorobium chlorochromatii (strain CaD3).